The following is a 332-amino-acid chain: Glycerol-3-phosphate dehydrogenase [NAD(P)+] (332 aa).

Residues Ser11, Trp12, Arg32, Arg33, and Lys106 each contribute to the NADPH site. Sn-glycerol 3-phosphate is bound by residues Lys106 and Gly136. Ala140 is an NADPH binding site. The sn-glycerol 3-phosphate site is built by Lys191, Asp244, Ser254, Arg255, and Asn256. Residue Lys191 is the Proton acceptor of the active site. Arg255 provides a ligand contact to NADPH. The NADPH site is built by Val280 and Glu282.

Belongs to the NAD-dependent glycerol-3-phosphate dehydrogenase family.

It is found in the cytoplasm. It catalyses the reaction sn-glycerol 3-phosphate + NAD(+) = dihydroxyacetone phosphate + NADH + H(+). It carries out the reaction sn-glycerol 3-phosphate + NADP(+) = dihydroxyacetone phosphate + NADPH + H(+). Its pathway is membrane lipid metabolism; glycerophospholipid metabolism. Catalyzes the reduction of the glycolytic intermediate dihydroxyacetone phosphate (DHAP) to sn-glycerol 3-phosphate (G3P), the key precursor for phospholipid synthesis. This Corynebacterium aurimucosum (strain ATCC 700975 / DSM 44827 / CIP 107346 / CN-1) (Corynebacterium nigricans) protein is Glycerol-3-phosphate dehydrogenase [NAD(P)+].